The primary structure comprises 246 residues: 14-3-3 protein beta/alpha (246 aa).

An N-acetylmethionine modification is found at Met-1. Thr-2 is subject to N-acetylthreonine; in 14-3-3 protein beta/alpha, N-terminally processed. Phosphothreonine is present on Thr-2. Position 5 is an N6-acetyllysine (Lys-5). Lys-51 bears the N6-acetyllysine; alternate mark. Lys-51 is covalently cross-linked (Glycyl lysine isopeptide (Lys-Gly) (interchain with G-Cter in SUMO2); alternate). Ser-60 carries the phosphoserine modification. Residue Lys-70 is modified to N6-acetyllysine. Residues Tyr-84 and Tyr-106 each carry the 3'-nitrotyrosine modification. Lys-117 carries the post-translational modification N6-acetyllysine. Ser-186 and Ser-232 each carry phosphoserine.

The protein belongs to the 14-3-3 family. As to quaternary structure, homodimer. Interacts with SAMSN1 and PRKCE. Interacts with AKAP13. Interacts with SSH1 and TORC2/CRTC2. Interacts with ABL1; the interaction results in cytoplasmic location of ABL1 and inhibition of cABL-mediated apoptosis. Interacts with ROR2 (dimer); the interaction results in phosphorylation of YWHAB on tyrosine residues. Interacts with GAB2. Interacts with YAP1 (phosphorylated form). Interacts with the phosphorylated (by AKT1) form of SRPK2. Interacts with PKA-phosphorylated AANAT. Interacts with MYO1C. Interacts with SIRT2. Interacts with the 'Thr-369' phosphorylated form of DAPK2. Interacts with PI4KB, TBC1D22A and TBC1D22B. Interacts with the 'Ser-1134' and 'Ser-1161' phosphorylated form of SOS1. Interacts (via phosphorylated form) with YWHAB; this interaction occurs in a protein kinase AKT1-dependent manner. Interacts with SLITRK1. Interacts with SYNPO2 (phosphorylated form); YWHAB competes with ACTN2 for interaction with SYNPO2. Interacts with RIPOR2 (via phosphorylated form); this interaction occurs in a chemokine-dependent manner and does not compete for binding of RIPOR2 with RHOA nor blocks inhibition of RIPOR2-mediated RHOA activity. Interacts with MARK2 and MARK3. Interacts with TESK1; the interaction is dependent on the phosphorylation of TESK1 'Ser-439' and inhibits TESK1 kinase activity. Interacts with MEFV. Interacts with HDAC4. Interacts with ADAM22 (via C-terminus). In terms of processing, isoform alpha differs from isoform beta in being phosphorylated. Phosphorylated on Ser-60 by protein kinase C delta type catalytic subunit in a sphingosine-dependent fashion. Isoform Short contains a N-acetylmethionine at position 1.

The protein resides in the cytoplasm. It localises to the melanosome. Its function is as follows. Adapter protein implicated in the regulation of a large spectrum of both general and specialized signaling pathways. Binds to a large number of partners, usually by recognition of a phosphoserine or phosphothreonine motif. Binding generally results in the modulation of the activity of the binding partner. Negative regulator of osteogenesis. Blocks the nuclear translocation of the phosphorylated form (by AKT1) of SRPK2 and antagonizes its stimulatory effect on cyclin D1 expression resulting in blockage of neuronal apoptosis elicited by SRPK2. Negative regulator of signaling cascades that mediate activation of MAP kinases via AKAP13. This Mus musculus (Mouse) protein is 14-3-3 protein beta/alpha (Ywhab).